The chain runs to 260 residues: Thiazole synthase (260 aa).

The active-site Schiff-base intermediate with DXP is the Lys96. 1-deoxy-D-xylulose 5-phosphate contacts are provided by residues Gly157, 184–185, and 206–207; these read AG and NT.

The protein belongs to the ThiG family. Homotetramer. Forms heterodimers with either ThiH or ThiS.

It localises to the cytoplasm. It catalyses the reaction [ThiS sulfur-carrier protein]-C-terminal-Gly-aminoethanethioate + 2-iminoacetate + 1-deoxy-D-xylulose 5-phosphate = [ThiS sulfur-carrier protein]-C-terminal Gly-Gly + 2-[(2R,5Z)-2-carboxy-4-methylthiazol-5(2H)-ylidene]ethyl phosphate + 2 H2O + H(+). Its pathway is cofactor biosynthesis; thiamine diphosphate biosynthesis. In terms of biological role, catalyzes the rearrangement of 1-deoxy-D-xylulose 5-phosphate (DXP) to produce the thiazole phosphate moiety of thiamine. Sulfur is provided by the thiocarboxylate moiety of the carrier protein ThiS. In vitro, sulfur can be provided by H(2)S. This Bradyrhizobium sp. (strain ORS 278) protein is Thiazole synthase.